Consider the following 1649-residue polypeptide: eIF-2-alpha kinase GCN2 (1649 aa).

Residues 1–26 (MAGGRGAAGRGPAEPQESYSQRQDHE) form a disordered region. The 113-residue stretch at 25-137 (HELQALEAIY…HHVQSFLSEH (113 aa)) folds into the RWD domain. Residues 146–205 (HEEMLERQAQEKQQRLLEARQKEEQEQREILHEIQKRKEEIKEEKKRKEMAKQERLEITS) are a coiled coil. A disordered region spans residues 227–260 (HGGSPDFVGNGKARAHSSGRSRRERQYSVCSGEA). Ser-230 is modified (phosphoserine). Basic residues predominate over residues 239-249 (ARAHSSGRSRR). Protein kinase domains are found at residues 296–539 (VYNA…HSFI) and 590–1001 (FEEL…SELL). Residues 596–604 (LGKGAFGAV) and Lys-619 each bind ATP. Positions 662 to 785 (PAVPGTPPPD…CNEKDSRHEI (124 aa)) are disordered. Thr-667 carries the post-translational modification Phosphothreonine. Positions 705 to 721 (LSSSVEWSTSAERSNSA) are enriched in polar residues. 2 stretches are compositionally biased toward acidic residues: residues 731 to 740 (SSDEEDEDER) and 754 to 764 (SDSDIIFDNED). Asp-847 serves as the catalytic Proton acceptor. Thr-870 carries the phosphothreonine modification. 2 positions are modified to phosphothreonine; by autocatalysis: Thr-899 and Thr-904. The histidyl-tRNA synthetase-like stretch occupies residues 1022–1493 (TDGKAYRTMM…DHVMQKLRTK (472 aa)). Lys-1259 carries the post-translational modification N6-acetyllysine.

The protein belongs to the protein kinase superfamily. Ser/Thr protein kinase family. GCN2 subfamily. Homodimer; homodimerization is important for kinase activation by uncharged tRNAs. Interacts with GCN1; this interaction stimulates EIF2AK4/GCN2 kinase activity and is impaired by IMPACT upon a variety of stress conditions, such as amino acid depletion, UV-C irradiation, proteasome inhibitor treatment and glucose deprivation. Interacts with DNAJC3; this interaction inhibits EIF2AK4/GCN2 kinase activity during endoplasmic reticulum (ER), hypothermic and amino acid-starving stress conditions. Interacts with MAP3K20; activates EIF2AK4/GCN2 kinase activity in response to moderate ribotoxic stress. Autophosphorylated; autophosphorylation on Thr-899 is increased upon amino acid starvation and in UV irradiation cells and inhibited in presence of IMPACT.

The protein localises to the cytoplasm. The catalysed reaction is L-seryl-[protein] + ATP = O-phospho-L-seryl-[protein] + ADP + H(+). It carries out the reaction L-threonyl-[protein] + ATP = O-phospho-L-threonyl-[protein] + ADP + H(+). Functionally, metabolic-stress sensing protein kinase that phosphorylates the alpha subunit of eukaryotic translation initiation factor 2 (EIF2S1/eIF-2-alpha) in response to low amino acid availability. Plays a role as an activator of the integrated stress response (ISR) required for adaptation to amino acid starvation. EIF2S1/eIF-2-alpha phosphorylation in response to stress converts EIF2S1/eIF-2-alpha into a global protein synthesis inhibitor, leading to a global attenuation of cap-dependent translation, and thus to a reduced overall utilization of amino acids, while concomitantly initiating the preferential translation of ISR-specific mRNAs, such as the transcriptional activator ATF4, and hence allowing ATF4-mediated reprogramming of amino acid biosynthetic gene expression to alleviate nutrient depletion. Required for the translational induction of protein kinase PRKCH following amino acid starvation. Binds uncharged tRNAs. Involved in cell cycle arrest by promoting cyclin D1 mRNA translation repression after the unfolded protein response pathway (UPR) activation or cell cycle inhibitor CDKN1A/p21 mRNA translation activation in response to amino acid deprivation. Plays a role in the consolidation of synaptic plasticity, learning as well as formation of long-term memory. Plays a role in neurite outgrowth inhibition. Plays a role in feeding behavior to maintain amino acid homeostasis; contributes to the innate aversion toward diets of imbalanced amino acid composition. Plays a proapoptotic role in response to glucose deprivation. Promotes global cellular protein synthesis repression in response to UV irradiation independently of the stress-activated protein kinase/c-Jun N-terminal kinase (SAPK/JNK) and p38 MAPK signaling pathways. Plays a role in the antiviral response against alphavirus infection; impairs early viral mRNA translation of the incoming genomic virus RNA, thus preventing alphavirus replication. This is eIF-2-alpha kinase GCN2 from Rattus norvegicus (Rat).